The chain runs to 907 residues: Catenin alpha-1 (907 aa).

The segment covering 870-879 has biased composition (basic and acidic residues); sequence VKREKLDDGQ. The disordered stretch occupies residues 870 to 895; that stretch reads VKREKLDDGQTNKVKRSSQKKHINPV. Basic residues predominate over residues 882-892; that stretch reads KVKRSSQKKHI.

This sequence belongs to the vinculin/alpha-catenin family. Interacts with ctnnb1, jupa and cdh2. Interacts with cdh1 during early stages of oogenesis, interaction is no longer present when oocyte develops into the unfertilized egg. In terms of tissue distribution, expressed in the skin (at protein level). Expressed in the ovary.

The protein localises to the cell junction. It is found in the adherens junction. The protein resides in the cytoplasm. It localises to the cytoskeleton. Its subcellular location is the cell membrane. The protein localises to the nucleus. Associates with the cytoplasmic domain of a variety of cadherins, forming catenin and cadherin complexes which are further linked to the actin filament network and is thereby involved in cell-cell adhesion. Required for embryonic development, via maintenance of adherens junctions that facilitate the maintenance of the epithelial barrier. This is Catenin alpha-1 from Danio rerio (Zebrafish).